We begin with the raw amino-acid sequence, 216 residues long: GTP cyclohydrolase-2 (216 aa).

50-54 (RIHSE) is a GTP binding site. Positions 55, 66, and 68 each coordinate Zn(2+). GTP contacts are provided by residues glutamine 71, 93–95 (EGR), and threonine 115. Aspartate 127 functions as the Proton acceptor in the catalytic mechanism. Arginine 129 acts as the Nucleophile in catalysis. Positions 150 and 155 each coordinate GTP.

Belongs to the GTP cyclohydrolase II family. Zn(2+) serves as cofactor.

It carries out the reaction GTP + 4 H2O = 2,5-diamino-6-hydroxy-4-(5-phosphoribosylamino)-pyrimidine + formate + 2 phosphate + 3 H(+). It participates in cofactor biosynthesis; riboflavin biosynthesis; 5-amino-6-(D-ribitylamino)uracil from GTP: step 1/4. Catalyzes the conversion of GTP to 2,5-diamino-6-ribosylamino-4(3H)-pyrimidinone 5'-phosphate (DARP), formate and pyrophosphate. This is GTP cyclohydrolase-2 from Histophilus somni (strain 129Pt) (Haemophilus somnus).